The sequence spans 382 residues: Na(+)/H(+) antiporter NhaA 2 (382 aa).

11 helical membrane-spanning segments follow: residues 7 to 27 (MVLS…LALL), 58 to 78 (LDLW…GLEL), 94 to 114 (SLPI…FIAI), 124 to 144 (GWAI…MLLG), 153 to 173 (LFLL…IALF), 178 to 198 (LSAL…LLNY), 199 to 219 (YHIT…IAML), 255 to 275 (NPWV…GIDI), 291 to 311 (IILG…FIAI), 327 to 347 (FYGI…IDGL), and 361 to 381 (LAIL…LKIV).

The protein belongs to the NhaA Na(+)/H(+) (TC 2.A.33) antiporter family.

The protein resides in the cell inner membrane. It catalyses the reaction Na(+)(in) + 2 H(+)(out) = Na(+)(out) + 2 H(+)(in). Its function is as follows. Na(+)/H(+) antiporter that extrudes sodium in exchange for external protons. In Campylobacter jejuni (strain RM1221), this protein is Na(+)/H(+) antiporter NhaA 2.